A 135-amino-acid chain; its full sequence is Large ribosomal subunit protein bL17 (135 aa).

This sequence belongs to the bacterial ribosomal protein bL17 family. As to quaternary structure, part of the 50S ribosomal subunit. Contacts protein L32.

The protein is Large ribosomal subunit protein bL17 of Rhodopseudomonas palustris (strain BisB18).